Reading from the N-terminus, the 125-residue chain is Large ribosomal subunit protein bL17 (125 aa).

This sequence belongs to the bacterial ribosomal protein bL17 family. As to quaternary structure, part of the 50S ribosomal subunit. Contacts protein L32.

The protein is Large ribosomal subunit protein bL17 of Blochmanniella floridana.